We begin with the raw amino-acid sequence, 355 residues long: Erythronate-4-phosphate dehydrogenase (355 aa).

Substrate-binding residues include Ser45 and Thr66. Asp146 lines the NAD(+) pocket. Residue Arg206 is part of the active site. Asp229 contributes to the NAD(+) binding site. The active site involves Glu234. His251 serves as the catalytic Proton donor. NAD(+) is bound at residue Gly254. Tyr255 provides a ligand contact to substrate.

This sequence belongs to the D-isomer specific 2-hydroxyacid dehydrogenase family. PdxB subfamily. As to quaternary structure, homodimer.

Its subcellular location is the cytoplasm. It carries out the reaction 4-phospho-D-erythronate + NAD(+) = (R)-3-hydroxy-2-oxo-4-phosphooxybutanoate + NADH + H(+). Its pathway is cofactor biosynthesis; pyridoxine 5'-phosphate biosynthesis; pyridoxine 5'-phosphate from D-erythrose 4-phosphate: step 2/5. Functionally, catalyzes the oxidation of erythronate-4-phosphate to 3-hydroxy-2-oxo-4-phosphonooxybutanoate. This is Erythronate-4-phosphate dehydrogenase from Acinetobacter baumannii (strain AB307-0294).